Here is an 83-residue protein sequence, read N- to C-terminus: Carboxysome shell vertex protein CsoS4A (83 aa).

Positions 1-78 (MKIMQVEKTL…SDLTIIGIID (78 aa)) constitute a BMV domain.

Belongs to the CcmL/EutN family. CsoS4 subfamily. In terms of assembly, homopentamer.

The protein resides in the carboxysome. Its function is as follows. Probably forms vertices in the carboxysome, a polyhedral inclusion where RuBisCO (ribulose bisphosphate carboxylase, cbbL-cbbS) is sequestered. Has been modeled to induce curvature upon insertion into an otherwise flat hexagonal layer of major carboxysome subunits. A minor shell protein, only 12 pentamers of CsoS4A/CsoS4B are calculated to be present in each carboxysome. The 2 CsoS4 proteins contribute to the impermeability of the carboxysome to CO(2). Functionally, unlike beta-carboxysomes, alpha-carboxysomes (Cb) can form without cargo protein. CsoS2 is essential for Cb formation and is also capable of targeting foreign proteins to the Cb. The Cb shell assembles with the aid of CsoS2; CsoS1A, CsoS1B and CsoS1C form the majority of the shell while CsoS4A and CsoS4B form vertices. CsoS1D forms pseudohexamers that probably control metabolite flux into and out of the shell. In Halothiobacillus neapolitanus (strain ATCC 23641 / c2) (Thiobacillus neapolitanus), this protein is Carboxysome shell vertex protein CsoS4A.